A 523-amino-acid chain; its full sequence is Magnesium/proton exchanger 1 (523 aa).

11 consecutive transmembrane segments (helical) span residues 24-44 (LLPIGVRAFIYTAVLAYCFIG), 88-108 (IADVALLAFGTSFPQISLATI), 125-145 (GTLVGSAAFDLFPIHAVCVVM), 157-177 (LGVWLVELFWSFWAYIWLYII), 185-205 (VITLWEALLTVLQYGLLLLHA), 325-345 (VIGISWNLIIAPWKMLFAFVP), 349-369 (IAHGWIAFICSLIFISGIAYG), 377-397 (ISCVTGVSPYVIAFTALAAGT), 428-448 (VNIYVGIGVPWLVDTMYNYFV), 461-481 (LSFSLLVFFATSFGCITVLVL), and 495-515 (MWAWATSVYFMILWVVFVVLS).

The protein belongs to the Ca(2+):cation antiporter (CaCA) (TC 2.A.19) family. MHX subfamily.

The protein localises to the vacuole membrane. Vacuolar transporter that exchanges protons with Mg(2+), Zn(2+) and Fe(2+) ions. May control the partitioning of Mg(2+) and Zn(2+) between plant organs. This Oryza sativa subsp. japonica (Rice) protein is Magnesium/proton exchanger 1 (MHX1).